Consider the following 90-residue polypeptide: Small ribosomal subunit protein uS15c (90 aa).

The protein belongs to the universal ribosomal protein uS15 family. Part of the 30S ribosomal subunit.

The protein resides in the plastid. It is found in the chloroplast. This is Small ribosomal subunit protein uS15c (rps15) from Drimys granadensis.